The following is a 246-amino-acid chain: uncharacterized protein (246 aa).

This sequence to M.jannaschii MJ1676.

This is an uncharacterized protein from Methanothermobacter thermautotrophicus (strain ATCC 29096 / DSM 1053 / JCM 10044 / NBRC 100330 / Delta H) (Methanobacterium thermoautotrophicum).